A 611-amino-acid chain; its full sequence is tRNA uridine 5-carboxymethylaminomethyl modification enzyme MnmG (611 aa).

FAD-binding positions include 12-17, V124, and S179; that span reads GGGHAG. 271 to 285 provides a ligand contact to NAD(+); it reads GPRYCPSVEDKIVRF. Q368 lines the FAD pocket.

Belongs to the MnmG family. As to quaternary structure, homodimer. Heterotetramer of two MnmE and two MnmG subunits. The cofactor is FAD.

Its subcellular location is the cytoplasm. Functionally, NAD-binding protein involved in the addition of a carboxymethylaminomethyl (cmnm) group at the wobble position (U34) of certain tRNAs, forming tRNA-cmnm(5)s(2)U34. This Mycoplasma mobile (strain ATCC 43663 / 163K / NCTC 11711) (Mesomycoplasma mobile) protein is tRNA uridine 5-carboxymethylaminomethyl modification enzyme MnmG.